The chain runs to 608 residues: MAESIIIRVQSPDGVKRITATKRETAATFLKKVAKEFGFQNNGFSVYINRNKTGEITASSSKSLHLLKIKHGDLLFLFPSSLAGPSSEMETSTSVGLKAFGAPHVVEDEIDQYLSKQDGKIYRSRDPQLCRHGPLGKCVHCVPLEPFDEDYLNHLEPPVKHMSFHAYIRKLTGGADKGKFVALENISCKIKSGCEGHLPWPNGICTKCQPSAITLNRQKYRHVDNIMFENHTVADRFLDFWRKTGNQHFGYLYGRYTEHKDIPLGIRAEVAAIYEPPQIGTQNSLELLEDPKAEVVDEIASKLGLRKVGWIFTDLVSEDTRKGTVRYSRNKDTYFLSSEECITAGDFQNKHPNICRLSPDGHFGSKFVTAVATGGPDNQVHFEGYQVSNQCMALVRDECLLPCKDAPELGYAKESSSEQYVPDVFYKDIDKFGNEITQLARPLPVEYLIIDITTTFPKDPVYTFSISQNPFPIENRDVLGETQDFHSLATYLSQNTSSVFLDTISDFHLLLFLVTNEVMPLQDSISLLLEAVRTRNEELAQTWKKSEQWATIEQLCSTVGVQLPGLHEFGAVGGSARAATSAMWACQHCTFMNQPGTGHCEMCSLPRT.

Ala-2 carries the post-translational modification N-acetylalanine. Residue Lys-179 is modified to N6-acetyllysine. One can recognise an MPN domain in the interval 226–363 (IMFENHTVAD…ICRLSPDGHF (138 aa)). A RanBP2-type zinc finger spans residues 580 to 608 (TSAMWACQHCTFMNQPGTGHCEMCSLPRT).

It belongs to the NPL4 family. As to quaternary structure, heterodimer with UFD1. The heterodimer binds ubiquitinated proteins. The heterodimer binds to VCP and inhibits Golgi membrane fusion. Interacts with ZFAND2B; probably through VCP.

Its subcellular location is the cytoplasm. It localises to the cytosol. The protein localises to the endoplasmic reticulum. The protein resides in the nucleus. It functions in the pathway protein degradation; proteasomal ubiquitin-dependent pathway. The ternary complex containing UFD1, VCP and NPLOC4 binds ubiquitinated proteins and is necessary for the export of misfolded proteins from the ER to the cytoplasm, where they are degraded by the proteasome. The NPLOC4-UFD1-VCP complex regulates spindle disassembly at the end of mitosis and is necessary for the formation of a closed nuclear envelope. Acts as a negative regulator of type I interferon production via the complex formed with VCP and UFD1, which binds to RIGI and recruits RNF125 to promote ubiquitination and degradation of RIGI. In Rattus norvegicus (Rat), this protein is Nuclear protein localization protein 4 homolog (Nploc4).